Reading from the N-terminus, the 443-residue chain is Phosphoglucosamine mutase (443 aa).

The active-site Phosphoserine intermediate is the serine 100. Positions 100, 239, 241, and 243 each coordinate Mg(2+). The residue at position 100 (serine 100) is a Phosphoserine.

It belongs to the phosphohexose mutase family. Mg(2+) is required as a cofactor. Activated by phosphorylation.

The enzyme catalyses alpha-D-glucosamine 1-phosphate = D-glucosamine 6-phosphate. Its function is as follows. Catalyzes the conversion of glucosamine-6-phosphate to glucosamine-1-phosphate. The chain is Phosphoglucosamine mutase from Shewanella loihica (strain ATCC BAA-1088 / PV-4).